A 400-amino-acid chain; its full sequence is Putative zinc-binding protein ORF78 (400 aa).

Residues 9-33 (LPRKRRAVAQPRTRQPPPKVHREDT) form a disordered region.

This Ictalurid herpesvirus 1 (strain Auburn) (IcHV-1) protein is Putative zinc-binding protein ORF78 (ORF78).